The sequence spans 136 residues: ATP synthase epsilon chain (136 aa).

The interval 100 to 120 (QGALEEANRGEDKPNQLKASN) is disordered. Residues 105–114 (EANRGEDKPN) are compositionally biased toward basic and acidic residues.

This sequence belongs to the ATPase epsilon chain family. As to quaternary structure, F-type ATPases have 2 components, CF(1) - the catalytic core - and CF(0) - the membrane proton channel. CF(1) has five subunits: alpha(3), beta(3), gamma(1), delta(1), epsilon(1). CF(0) has three main subunits: a, b and c.

The protein localises to the cellular thylakoid membrane. Functionally, produces ATP from ADP in the presence of a proton gradient across the membrane. The sequence is that of ATP synthase epsilon chain (atpC) from Synechocystis sp. (strain ATCC 27184 / PCC 6803 / Kazusa).